The primary structure comprises 661 residues: Probable urea active transporter 3 (661 aa).

A run of 15 helical transmembrane segments spans residues 13–33 (GIVI…TYVL), 56–76 (GLIS…LTSA), 86–106 (GSMW…VIAL), 132–152 (AVFL…LLLG), 165–185 (VVAA…SGGL), 197–217 (VIVY…SVHI), 251–271 (AVFV…CDPS), 288–308 (YFAG…AAAL), 352–372 (AGVL…LVAF), 397–417 (VTHV…VLFN), 419–439 (IGIT…PAVF), 454–474 (GMII…VGSC), 495–515 (VGNF…SYFF), 556–576 (IGIF…PLPM), and 591–611 (WIIV…FYPL).

The protein belongs to the sodium:solute symporter (SSF) (TC 2.A.21) family.

The protein localises to the membrane. The protein resides in the golgi apparatus membrane. Involved in active transport of urea. In Schizosaccharomyces pombe (strain 972 / ATCC 24843) (Fission yeast), this protein is Probable urea active transporter 3 (dur3-3).